We begin with the raw amino-acid sequence, 144 residues long: Prefoldin subunit alpha (144 aa).

It belongs to the prefoldin alpha subunit family. In terms of assembly, heterohexamer of two alpha and four beta subunits.

It is found in the cytoplasm. Molecular chaperone capable of stabilizing a range of proteins. Seems to fulfill an ATP-independent, HSP70-like function in archaeal de novo protein folding. The sequence is that of Prefoldin subunit alpha from Methanococcus maripaludis (strain C7 / ATCC BAA-1331).